Here is an 86-residue protein sequence, read N- to C-terminus: Exodeoxyribonuclease 7 small subunit (86 aa).

This sequence belongs to the XseB family. In terms of assembly, heterooligomer composed of large and small subunits.

It localises to the cytoplasm. It catalyses the reaction Exonucleolytic cleavage in either 5'- to 3'- or 3'- to 5'-direction to yield nucleoside 5'-phosphates.. Bidirectionally degrades single-stranded DNA into large acid-insoluble oligonucleotides, which are then degraded further into small acid-soluble oligonucleotides. This chain is Exodeoxyribonuclease 7 small subunit, found in Xanthomonas oryzae pv. oryzae (strain MAFF 311018).